Consider the following 343-residue polypeptide: Methylthioribose-1-phosphate isomerase (343 aa).

Residues 48 to 50, R88, and Q193 each bind substrate; that span reads RGA. The active-site Proton donor is D234. 244-245 is a binding site for substrate; the sequence is NK.

The protein belongs to the eIF-2B alpha/beta/delta subunits family. MtnA subfamily.

It carries out the reaction 5-(methylsulfanyl)-alpha-D-ribose 1-phosphate = 5-(methylsulfanyl)-D-ribulose 1-phosphate. It functions in the pathway amino-acid biosynthesis; L-methionine biosynthesis via salvage pathway; L-methionine from S-methyl-5-thio-alpha-D-ribose 1-phosphate: step 1/6. Catalyzes the interconversion of methylthioribose-1-phosphate (MTR-1-P) into methylthioribulose-1-phosphate (MTRu-1-P). The polypeptide is Methylthioribose-1-phosphate isomerase (Thermotoga maritima (strain ATCC 43589 / DSM 3109 / JCM 10099 / NBRC 100826 / MSB8)).